A 462-amino-acid polypeptide reads, in one-letter code: ATP synthase subunit beta (462 aa).

151–158 contacts ATP; sequence GGAGVGKT.

The protein belongs to the ATPase alpha/beta chains family. In terms of assembly, F-type ATPases have 2 components, CF(1) - the catalytic core - and CF(0) - the membrane proton channel. CF(1) has five subunits: alpha(3), beta(3), gamma(1), delta(1), epsilon(1). CF(0) has four main subunits: a(1), b(1), b'(1) and c(9-12).

The protein localises to the cell inner membrane. The catalysed reaction is ATP + H2O + 4 H(+)(in) = ADP + phosphate + 5 H(+)(out). Functionally, produces ATP from ADP in the presence of a proton gradient across the membrane. The catalytic sites are hosted primarily by the beta subunits. This Pelodictyon phaeoclathratiforme (strain DSM 5477 / BU-1) protein is ATP synthase subunit beta.